We begin with the raw amino-acid sequence, 71 residues long: Large ribosomal subunit protein bL31 (71 aa).

Positions 16, 18, 37, and 40 each coordinate Zn(2+).

This sequence belongs to the bacterial ribosomal protein bL31 family. Type A subfamily. Part of the 50S ribosomal subunit. It depends on Zn(2+) as a cofactor.

Binds the 23S rRNA. This Nitratidesulfovibrio vulgaris (strain ATCC 29579 / DSM 644 / CCUG 34227 / NCIMB 8303 / VKM B-1760 / Hildenborough) (Desulfovibrio vulgaris) protein is Large ribosomal subunit protein bL31.